Here is a 119-residue protein sequence, read N- to C-terminus: Large ribosomal subunit protein bL20 (119 aa).

This sequence belongs to the bacterial ribosomal protein bL20 family.

Functionally, binds directly to 23S ribosomal RNA and is necessary for the in vitro assembly process of the 50S ribosomal subunit. It is not involved in the protein synthesizing functions of that subunit. The chain is Large ribosomal subunit protein bL20 from Paracoccus denitrificans (strain Pd 1222).